Reading from the N-terminus, the 311-residue chain is Thioredoxin reductase (311 aa).

Residues 15–18 (SGPA), 37–44 (EGTQFGGA), asparagine 53, and valine 86 contribute to the FAD site. A disulfide bridge connects residues cysteine 137 and cysteine 140. NADP(+)-binding residues include serine 158, histidine 177, arginine 183, isoleucine 240, and tyrosine 260. FAD-binding positions include aspartate 280 and 287 to 290 (RQAI). Residue arginine 287 coordinates NADP(+).

This sequence belongs to the class-II pyridine nucleotide-disulfide oxidoreductase family. Homodimer. The cofactor is FAD.

Its subcellular location is the cytoplasm. It carries out the reaction [thioredoxin]-dithiol + NADP(+) = [thioredoxin]-disulfide + NADPH + H(+). This chain is Thioredoxin reductase, found in Mycolicibacterium smegmatis (Mycobacterium smegmatis).